Here is a 227-residue protein sequence, read N- to C-terminus: Transmembrane emp24 domain-containing protein 4 (227 aa).

The first 29 residues, 1–29 (MAGVGVGPLQGMVRFGLLVLTVCAACARG), serve as a signal peptide directing secretion. At 30–194 (LYFHIGETEK…RLTSESTNQR (165 aa)) the chain is on the lumenal side. The 99-residue stretch at 39 to 137 (KRCFIEEIPD…KLRVHLDIQV (99 aa)) folds into the GOLD domain. Asn117 carries an N-linked (GlcNAc...) asparagine glycan. The stretch at 147 to 176 (IAAKDKLTELQLRARQLLDQVEQIQKEQDY) forms a coiled coil. Residues 195-212 (VLWWSIAQTVILILTGIW) form a helical membrane-spanning segment. Over 213-227 (QMRHLKSFFEAKKLV) the chain is Cytoplasmic. The COPII vesicle coat-binding motif lies at 220–221 (FF). The short motif at 220 to 227 (FFEAKKLV) is the COPI vesicle coat-binding element.

It belongs to the EMP24/GP25L family.

The protein localises to the endoplasmic reticulum membrane. In terms of biological role, involved in vesicular protein trafficking, mainly in the early secretory pathway. Involved in the maintenance of the Golgi apparatus. Appears to play a role in the biosynthesis of secreted cargo including processing. Involved in endoplasmic reticulum stress response. May play a role in the regulation of heat-shock response and apoptosis. The protein is Transmembrane emp24 domain-containing protein 4 (Tmed4) of Mus musculus (Mouse).